The primary structure comprises 227 residues: Atypical response regulator protein ChxR (227 aa).

The Response regulatory domain maps to 6–108 (HVLLVSEHWD…ILKSAISLFL (103 aa)). Positions 117-213 (PESIRFGPNV…LRGVGYLFSD (97 aa)) form a DNA-binding region, ompR/PhoB-type.

Homodimer.

May be a global positive regulator of transcription. Binds a cis-acting element of its own promoter DNA sequence and is hence probably also involved in its own transcription activation. The recognition sequence is 5'-WHGAWNH-N(3-5)-WHGAWNH-3', where W is A/T, H is C/A/T, N is G/C/A/T and the linker length in the middle is 3 to 5 nucleotides. This Chlamydia trachomatis serovar L2 (strain ATCC VR-902B / DSM 19102 / 434/Bu) protein is Atypical response regulator protein ChxR.